Reading from the N-terminus, the 246-residue chain is Phosphonates import ATP-binding protein PhnC (246 aa).

In terms of domain architecture, ABC transporter spans 2-246 (IKFENVSKIY…ILDEVYRKEA (245 aa)). 35–42 (GTSGAGKS) is an ATP binding site.

Belongs to the ABC transporter superfamily. Phosphonates importer (TC 3.A.1.9.1) family. The complex is composed of two ATP-binding proteins (PhnC), two transmembrane proteins (PhnE) and a solute-binding protein (PhnD).

The protein resides in the cell membrane. It catalyses the reaction phosphonate(out) + ATP + H2O = phosphonate(in) + ADP + phosphate + H(+). Its function is as follows. Part of the ABC transporter complex PhnCDE involved in phosphonates import. Responsible for energy coupling to the transport system. This chain is Phosphonates import ATP-binding protein PhnC, found in Lactococcus lactis subsp. lactis (strain IL1403) (Streptococcus lactis).